A 233-amino-acid polypeptide reads, in one-letter code: Delta-actitoxin-Amc1a (233 aa).

Positions 1-18 are cleaved as a signal peptide; it reads MKRIFIVALLFATCLVNA. 2 propeptides span residues 19-29 and 30-33; these read KPSINDADIKR and EPEP. P39 is modified (hydroxyproline). 2 cysteine pairs are disulfide-bonded: C40–C51 and C43–C58. Propeptides lie at residues 61 to 63 and 64 to 67; these read RKR and EPEP. P73 bears the Hydroxyproline mark. 2 disulfide bridges follow: C74/C85 and C77/C92. 2 propeptides span residues 95–97 and 98–101; these read RKR and EPEP. Residue P107 is modified to Hydroxyproline. Cystine bridges form between C108–C119 and C111–C126. Propeptides lie at residues 129 to 131 and 132 to 135; these read RKR and EPEP. P141 is modified (hydroxyproline). 2 disulfide bridges follow: C142/C153 and C145/C160. Propeptides lie at residues 163–165 and 166–169; these read RKR and EPEP. P175 carries the post-translational modification Hydroxyproline. 2 cysteine pairs are disulfide-bonded: C176/C187 and C179/C194. Propeptides lie at residues 197–199 and 200–203; these read RKR and EPEP. P209 is subject to Hydroxyproline. 2 disulfides stabilise this stretch: C210–C221 and C213–C228. Residues 231-233 constitute a propeptide that is removed on maturation; it reads RKR.

The protein belongs to the sea anemone BBH family. In terms of processing, each Am I peptide may contain 2 disulfide bonds. Post-translationally, the precursor protein seems to be processed in the following sequence: release of the signal peptide and of the propeptide, production of six identical 34-residue peptides by cleavage between Arg and Glu, release of four N-terminal and three C-terminal residues from each peptide and hydroxylation of each Pro in position 6 of the resulting 27-residue peptides.

It localises to the secreted. It is found in the nematocyst. In terms of biological role, may inhibit voltage-gated sodium channels (Nav). This is Delta-actitoxin-Amc1a from Antheopsis maculata (Sea anemone).